Here is a 158-residue protein sequence, read N- to C-terminus: NAD(P)H-quinone oxidoreductase subunit J, chloroplastic (158 aa).

Belongs to the complex I 30 kDa subunit family. As to quaternary structure, NDH is composed of at least 16 different subunits, 5 of which are encoded in the nucleus.

It is found in the plastid. Its subcellular location is the chloroplast thylakoid membrane. It catalyses the reaction a plastoquinone + NADH + (n+1) H(+)(in) = a plastoquinol + NAD(+) + n H(+)(out). It carries out the reaction a plastoquinone + NADPH + (n+1) H(+)(in) = a plastoquinol + NADP(+) + n H(+)(out). In terms of biological role, NDH shuttles electrons from NAD(P)H:plastoquinone, via FMN and iron-sulfur (Fe-S) centers, to quinones in the photosynthetic chain and possibly in a chloroplast respiratory chain. The immediate electron acceptor for the enzyme in this species is believed to be plastoquinone. Couples the redox reaction to proton translocation, and thus conserves the redox energy in a proton gradient. This chain is NAD(P)H-quinone oxidoreductase subunit J, chloroplastic, found in Ranunculus macranthus (Large buttercup).